A 97-amino-acid chain; its full sequence is Co-chaperonin GroES (97 aa).

The protein belongs to the GroES chaperonin family. In terms of assembly, heptamer of 7 subunits arranged in a ring. Interacts with the chaperonin GroEL.

The protein resides in the cytoplasm. Together with the chaperonin GroEL, plays an essential role in assisting protein folding. The GroEL-GroES system forms a nano-cage that allows encapsulation of the non-native substrate proteins and provides a physical environment optimized to promote and accelerate protein folding. GroES binds to the apical surface of the GroEL ring, thereby capping the opening of the GroEL channel. The polypeptide is Co-chaperonin GroES (Klebsiella aerogenes (Enterobacter aerogenes)).